Here is a 147-residue protein sequence, read N- to C-terminus: uncharacterized protein (147 aa).

This is an uncharacterized protein from Gallid herpesvirus 2 (strain Chicken/Md5/ATCC VR-987) (GaHV-2).